Reading from the N-terminus, the 737-residue chain is Delta and Notch-like epidermal growth factor-related receptor (737 aa).

A signal peptide spans 1–25; sequence MPPRRAQAPGAPLLPVLALLPLLLG. The Extracellular segment spans residues 26 to 640; the sequence is AGPQSGCLAS…LTNMPRHSLY (615 aa). EGF-like domains are found at residues 44–92 and 94–133; these read APGP…TYCQ and VADPCASNPCHHGNCSSSSSSSSDSYLCICNDGYEGLNCE. Residues 44-133 form an interaction with NOTCH1 region; sequence APGPCASQPC…NDGYEGLNCE (90 aa). Cystine bridges form between cysteine 48/cysteine 59, cysteine 53/cysteine 80, cysteine 82/cysteine 91, cysteine 98/cysteine 108, cysteine 103/cysteine 121, and cysteine 123/cysteine 132. Asparagine 204 carries an N-linked (GlcNAc...) asparagine glycan. 5 EGF-like domains span residues 309-348, 349-390, 392-428, 430-466, and 468-503; these read PGDSHSNDLECSGKGKCATKPSEATFSCTCQDQYIGTFCE, EFDA…ELCQ, KIDYCVLDPCRNGATCVSSLSGFTCQCLEGYFGSACE, KVDPCMSSPCQNNGTCYVDGVHFTCSCSPGFTGPTCA, and LVDFCALSPCAHGMCRSVGTSYKCLCDPGYHGLYCE. 23 disulfide bridges follow: cysteine 319–cysteine 336, cysteine 338–cysteine 347, cysteine 353–cysteine 364, cysteine 358–cysteine 378, cysteine 380–cysteine 389, cysteine 396–cysteine 407, cysteine 401–cysteine 416, cysteine 418–cysteine 427, cysteine 434–cysteine 445, cysteine 439–cysteine 454, cysteine 456–cysteine 465, cysteine 472–cysteine 482, cysteine 477–cysteine 491, cysteine 493–cysteine 502, cysteine 509–cysteine 520, cysteine 514–cysteine 529, cysteine 531–cysteine 540, cysteine 547–cysteine 558, cysteine 552–cysteine 567, cysteine 569–cysteine 578, cysteine 585–cysteine 596, cysteine 590–cysteine 605, and cysteine 607–cysteine 616. Residues 505–541 enclose the EGF-like 8; calcium-binding domain; sequence EYNECLSAPCLNAATCRDLINGYECVCLAEYKGTHCE. The 37-residue stretch at 543 to 579 folds into the EGF-like 9 domain; the sequence is YKDPCANISCLNGGTCDSEGLNGTCICAPGFTGEECD. Asparagine 564 carries an N-linked (GlcNAc...) asparagine glycan. One can recognise an EGF-like 10; calcium-binding domain in the interval 581-617; sequence DINECDSNPCHHAGTCLDQPNGYTCHCPHGWVGANCE. Residues 641-661 form a helical membrane-spanning segment; the sequence is IIIGALCVAFILMLIILIVGI. Topologically, residues 662–737 are cytoplasmic; sequence CRISRIEYQG…LVTLIKTKDL (76 aa). The interval 677-680 is interaction with AP1G1 and somatodendritic targeting; it reads YEEF. Serine 685 is modified (phosphoserine). The residue at position 711 (tyrosine 711) is a Phosphotyrosine. At threonine 714 the chain carries Phosphothreonine. Tyrosine 721 is modified (phosphotyrosine). Phosphoserine is present on serine 722.

As to quaternary structure, interacts with AP1G1. Interacts with NOTCH1. Post-translationally, N-glycosylated. As to expression, specifically expressed in brain neurons (at protein level).

The protein resides in the cell membrane. In terms of biological role, mediates neuron-glia interaction during astrocytogenesis. May promote differentiation of Bergmann glia during cerebellar development by activating DELTEX-dependent NOTCH1 signaling. The sequence is that of Delta and Notch-like epidermal growth factor-related receptor (Dner) from Mus musculus (Mouse).